The sequence spans 782 residues: Translation initiation factor IF-2 (782 aa).

Residues 1-14 are compositionally biased toward basic and acidic residues; the sequence is MSKNIDDKNEDGKK. Disordered regions lie at residues 1–106 and 132–174; these read MSKN…KKTY and SIVS…AETE. The span at 15–25 shows a compositional bias: basic residues; the sequence is IKIIKLRKKVV. A compositionally biased stretch (polar residues) spans 31–43; that stretch reads NDLSGKNNPSGST. A compositionally biased stretch (basic and acidic residues) spans 44 to 61; that stretch reads DLHKHNNKVEYSHSRDGR. Polar residues-rich tracts occupy residues 86–106 and 133–142; these read GYSQ…KKTY and IVSSASSTDS. Over residues 143 to 159 the composition is skewed to basic and acidic residues; it reads ENSKELNRKLGEKKKQQ. In terms of domain architecture, tr-type G spans 280–453; the sequence is EKPPVITIMG…DMMLLKANPS (174 aa). Residues 289–296 are G1; sequence GHVDHGKT. Residue 289–296 participates in GTP binding; the sequence is GHVDHGKT. Residues 314-318 are G2; sequence GITQH. Residues 335 to 338 are G3; the sequence is DTPG. GTP is bound by residues 335–339 and 389–392; these read DTPGH and NKID. Residues 389-392 are G4; sequence NKID. A G5 region spans residues 425–427; sequence SAL.

This sequence belongs to the TRAFAC class translation factor GTPase superfamily. Classic translation factor GTPase family. IF-2 subfamily.

It is found in the cytoplasm. One of the essential components for the initiation of protein synthesis. Protects formylmethionyl-tRNA from spontaneous hydrolysis and promotes its binding to the 30S ribosomal subunits. Also involved in the hydrolysis of GTP during the formation of the 70S ribosomal complex. This chain is Translation initiation factor IF-2, found in Borreliella afzelii (strain PKo) (Borrelia afzelii).